Reading from the N-terminus, the 338-residue chain is Popeye domain-containing protein 1-A (338 aa).

Topologically, residues 1–40 (MTTESIFITTLPMDFNSQFDNITIGLNDNETLCENWREIH) are extracellular. Asn21 and Asn29 each carry an N-linked (GlcNAc...) asparagine glycan. The helical transmembrane segment at 41-61 (HLVFHLANTCFAAGLVIPSTL) threads the bilayer. At 62–65 (NLHM) the chain is on the cytoplasmic side. A helical transmembrane segment spans residues 66 to 86 (LFLRGMLCLGCTFFIIWAVLF). At 87–91 (RCALD) the chain is on the extracellular side. A helical membrane pass occupies residues 92-112 (IMIWNATFLSINFMHFVYLVY). Residues 113 to 338 (KKRPIKIKKE…VGPLSHAVFC (226 aa)) lie on the Cytoplasmic side of the membrane. The tract at residues 296 to 317 (TNDNEDGLQNFLRGTSTTSSQR) is disordered. Polar residues predominate over residues 307 to 317 (LRGTSTTSSQR).

This sequence belongs to the popeye family. Expressed in the heart.

It is found in the lateral cell membrane. Its subcellular location is the cell junction. The protein resides in the tight junction. The protein localises to the membrane. In terms of biological role, cell adhesion molecule involved in the establishment and/or maintenance of cell integrity. Plays a role in vamp3-mediated vesicular transport and recycling of different receptor molecules. May be involved in the formation and regulation of the tight junction (TJ) paracellular permeability barrier in epithelial cells. May induce primordial adhesive contact and aggregation of epithelial cells in a Ca(2+)-independent manner. May be involved in epithelial movement during corneal sheet formation and regeneration. May play a role in the regulation of cell shape and movement by modulating the Rho-GTPase activity. May also be involved in striated muscle regeneration and in the regulation of cell spreading. This chain is Popeye domain-containing protein 1-A (popdc1-a), found in Xenopus laevis (African clawed frog).